A 487-amino-acid polypeptide reads, in one-letter code: Cytochrome P450 720B2 (487 aa).

Residues W14–V34 form a helical membrane-spanning segment. Position 436 (C436) interacts with heme.

The protein belongs to the cytochrome P450 family. The cofactor is heme.

It is found in the membrane. The sequence is that of Cytochrome P450 720B2 (CYP720B2) from Pinus taeda (Loblolly pine).